The following is a 164-amino-acid chain: SsrA-binding protein (164 aa).

The protein belongs to the SmpB family.

It is found in the cytoplasm. In terms of biological role, required for rescue of stalled ribosomes mediated by trans-translation. Binds to transfer-messenger RNA (tmRNA), required for stable association of tmRNA with ribosomes. tmRNA and SmpB together mimic tRNA shape, replacing the anticodon stem-loop with SmpB. tmRNA is encoded by the ssrA gene; the 2 termini fold to resemble tRNA(Ala) and it encodes a 'tag peptide', a short internal open reading frame. During trans-translation Ala-aminoacylated tmRNA acts like a tRNA, entering the A-site of stalled ribosomes, displacing the stalled mRNA. The ribosome then switches to translate the ORF on the tmRNA; the nascent peptide is terminated with the 'tag peptide' encoded by the tmRNA and targeted for degradation. The ribosome is freed to recommence translation, which seems to be the essential function of trans-translation. The protein is SsrA-binding protein of Shewanella woodyi (strain ATCC 51908 / MS32).